The primary structure comprises 410 residues: Replication factor C large subunit (410 aa).

46–53 (GDPGTGKT) provides a ligand contact to ATP.

The protein belongs to the activator 1 small subunits family. RfcL subfamily. Heteromultimer composed of small subunits (RfcS) and large subunits (RfcL).

Its function is as follows. Part of the RFC clamp loader complex which loads the PCNA sliding clamp onto DNA. The sequence is that of Replication factor C large subunit from Picrophilus torridus (strain ATCC 700027 / DSM 9790 / JCM 10055 / NBRC 100828 / KAW 2/3).